Here is a 537-residue protein sequence, read N- to C-terminus: Tegument protein BRRF2 (537 aa).

Disordered regions lie at residues 325–474 (LALP…EAQD) and 486–537 (GLRV…LSVI). Residues 334–347 (KPQQTCSQLTSRGN) show a composition bias toward polar residues. Residues 423–441 (SSQAAPSSSSVAPVASLSG) are compositionally biased toward low complexity. The span at 492-517 (DEDEDGSEDGEFSDLDLSDSDHEGDE) shows a compositional bias: acidic residues.

It belongs to the lymphocryptovirus BRRF2 family.

Its subcellular location is the virion tegument. The chain is Tegument protein BRRF2 from Homo sapiens (Human).